We begin with the raw amino-acid sequence, 908 residues long: PTS system glucose-specific EIICBA component (908 aa).

In terms of domain architecture, PTS EIIC type-1; first part spans 1-264; the sequence is MQISLVKIRN…YAPLWYTSAG (264 aa). 5 helical membrane passes run 31–51, 71–91, 100–120, 155–175, and 189–209; these read LMIP…GDAI, GGNV…AITF, FSAF…IIPV, VFGG…FYAI, and FVPI…LMVW. A unknown region spans residues 265-450; sequence GSLQEIANQQ…VSQFTVAVPS (186 aa). Positions 451–602 constitute a PTS EIIC type-1; second part domain; it reads LNPAQYSQGK…FNLATPGRGG (152 aa). The next 5 helical transmembrane spans lie at 459–479, 487–507, 509–529, 536–556, and 571–591; these read GKFP…ILAA, ASSI…TEPF, FTFL…LAAV, LLSA…ILYG, and VPII…FLTI. Residues 631 to 713 enclose the PTS EIIB type-1 domain; that stretch reads QIEAGMLLRA…QDIIQGKVNW (83 aa). The active-site Phosphocysteine intermediate; for EIIB activity is C653. The PTS EIIA type-1 domain maps to 762 to 875; the sequence is DDTFKNRLVG…DPITPFIVMQ (114 aa). The active-site Tele-phosphohistidine intermediate; for EIIA activity is the H815.

Its subcellular location is the cell membrane. It catalyses the reaction N(pros)-phospho-L-histidyl-[protein] + D-glucose(out) = D-glucose 6-phosphate(in) + L-histidyl-[protein]. In terms of biological role, the phosphoenolpyruvate-dependent sugar phosphotransferase system (sugar PTS), a major carbohydrate active transport system, catalyzes the phosphorylation of incoming sugar substrates concomitantly with their translocation across the cell membrane. This system is involved in glucose transport. This is PTS system glucose-specific EIICBA component (ptsG) from Mycoplasma genitalium (strain ATCC 33530 / DSM 19775 / NCTC 10195 / G37) (Mycoplasmoides genitalium).